The following is a 157-amino-acid chain: uncharacterized protein (157 aa).

An N-terminal signal peptide occupies residues 1–28 (MKRLFMKASLVLFAVVFVFAVKGAPAKA).

This is an uncharacterized protein from Bacillus subtilis (strain 168).